Consider the following 260-residue polypeptide: Spectinomycin 9-adenylyltransferase (260 aa).

It catalyses the reaction spectinomycin + ATP = 9-O-adenylylspectinomycin + diphosphate. Mediates bacterial resistance to the antibiotic spectinomycin but not streptomycin. In Staphylococcus aureus (strain Mu50 / ATCC 700699), this protein is Spectinomycin 9-adenylyltransferase (ant1).